The sequence spans 163 residues: Acetolactate synthase isozyme 3 small subunit (163 aa).

One can recognise an ACT domain in the interval 4 to 78 (ILSVLLENES…DVLRVSELGQ (75 aa)).

This sequence belongs to the acetolactate synthase small subunit family. As to quaternary structure, dimer of large and small chains.

The enzyme catalyses 2 pyruvate + H(+) = (2S)-2-acetolactate + CO2. It participates in amino-acid biosynthesis; L-isoleucine biosynthesis; L-isoleucine from 2-oxobutanoate: step 1/4. The protein operates within amino-acid biosynthesis; L-valine biosynthesis; L-valine from pyruvate: step 1/4. Its activity is regulated as follows. Sensitive to valine inhibition. The protein is Acetolactate synthase isozyme 3 small subunit (ilvH) of Escherichia coli (strain K12).